The primary structure comprises 217 residues: tRNA (guanine-N(7)-)-methyltransferase (217 aa).

S-adenosyl-L-methionine is bound by residues Glu44, Glu69, Asn96, and Asp118. Asp118 is a catalytic residue. Lys122 serves as a coordination point for substrate. The interval Arg124–Arg129 is interaction with RNA. Residues Asp154 and Thr191–Glu194 contribute to the substrate site.

The protein belongs to the class I-like SAM-binding methyltransferase superfamily. TrmB family.

The catalysed reaction is guanosine(46) in tRNA + S-adenosyl-L-methionine = N(7)-methylguanosine(46) in tRNA + S-adenosyl-L-homocysteine. It participates in tRNA modification; N(7)-methylguanine-tRNA biosynthesis. Its function is as follows. Catalyzes the formation of N(7)-methylguanine at position 46 (m7G46) in tRNA. The sequence is that of tRNA (guanine-N(7)-)-methyltransferase from Geobacillus kaustophilus (strain HTA426).